The following is a 208-amino-acid chain: dITP/XTP pyrophosphatase (208 aa).

16-21 (SNNKGK) is a substrate binding site. The active-site Proton acceptor is D79. D79 contacts Mg(2+). Residues S80, 166–169 (FGYD), K189, and 194–195 (HR) contribute to the substrate site.

The protein belongs to the HAM1 NTPase family. Homodimer. The cofactor is Mg(2+).

It carries out the reaction XTP + H2O = XMP + diphosphate + H(+). The enzyme catalyses dITP + H2O = dIMP + diphosphate + H(+). It catalyses the reaction ITP + H2O = IMP + diphosphate + H(+). In terms of biological role, pyrophosphatase that catalyzes the hydrolysis of nucleoside triphosphates to their monophosphate derivatives, with a high preference for the non-canonical purine nucleotides XTP (xanthosine triphosphate), dITP (deoxyinosine triphosphate) and ITP. Seems to function as a house-cleaning enzyme that removes non-canonical purine nucleotides from the nucleotide pool, thus preventing their incorporation into DNA/RNA and avoiding chromosomal lesions. The polypeptide is dITP/XTP pyrophosphatase (Acinetobacter baumannii (strain AB307-0294)).